Here is a 150-residue protein sequence, read N- to C-terminus: D-aminoacyl-tRNA deacylase (150 aa).

Positions 138-139 (GP) match the Gly-cisPro motif, important for rejection of L-amino acids motif.

Belongs to the DTD family. In terms of assembly, homodimer.

It localises to the cytoplasm. The catalysed reaction is glycyl-tRNA(Ala) + H2O = tRNA(Ala) + glycine + H(+). It catalyses the reaction a D-aminoacyl-tRNA + H2O = a tRNA + a D-alpha-amino acid + H(+). An aminoacyl-tRNA editing enzyme that deacylates mischarged D-aminoacyl-tRNAs. Also deacylates mischarged glycyl-tRNA(Ala), protecting cells against glycine mischarging by AlaRS. Acts via tRNA-based rather than protein-based catalysis; rejects L-amino acids rather than detecting D-amino acids in the active site. By recycling D-aminoacyl-tRNA to D-amino acids and free tRNA molecules, this enzyme counteracts the toxicity associated with the formation of D-aminoacyl-tRNA entities in vivo and helps enforce protein L-homochirality. In Cytophaga hutchinsonii (strain ATCC 33406 / DSM 1761 / CIP 103989 / NBRC 15051 / NCIMB 9469 / D465), this protein is D-aminoacyl-tRNA deacylase.